Here is a 577-residue protein sequence, read N- to C-terminus: External alternative NAD(P)H-ubiquinone oxidoreductase B1, mitochondrial (577 aa).

The transit peptide at 1–35 directs the protein to the mitochondrion; sequence MRGFTYLSKVLHSHSSYSKLLVLCSVSTGGLLVYA. Position 57 to 87 (57 to 87) interacts with FAD; it reads RVVVLGTGWGGTSFLKDVDISSYDVQVVSPR. 221–257 lines the NAD(+) pocket; the sequence is LHFVIVGGGPTGVEFAAELHDYVYEDLVKIYPSVKDF. An EF-hand domain is found at 378 to 413; that stretch reads KVMEDISTIFEAADKDDSGTLSVEEFRDVLEDIIIR. Residues aspartate 391, aspartate 393, serine 395, threonine 397, and glutamate 402 each contribute to the Ca(2+) site. The short motif at 568–577 is the Microbody targeting signal element; it reads YIFGRDSSRI.

This sequence belongs to the NADH dehydrogenase family. FAD serves as cofactor.

The protein localises to the mitochondrion inner membrane. Its subcellular location is the peroxisome. The enzyme catalyses a quinone + NADH + H(+) = a quinol + NAD(+). It catalyses the reaction a ubiquinone + NADH + H(+) = a ubiquinol + NAD(+). Its activity is regulated as follows. Activity is calcium-dependent with a more pronounced effect at higher pH. Its function is as follows. Calcium-dependent NAD(P)H dehydrogenase. Binds calcium ions. Alternative NADH-ubiquinone oxidoreductase which catalyzes the oxidation of mitochondrial NADH does not translocate protons across the inner mitochondrial membrane. This chain is External alternative NAD(P)H-ubiquinone oxidoreductase B1, mitochondrial (NDB1), found in Solanum tuberosum (Potato).